The chain runs to 344 residues: MDYKSAGVDVEAGRHFVERIRTSVEATHRPEVLGGLGGFGGLCRLPAGLEKPLLVAGTDGVGTKLELAQECGRHHGVGIDLVAMCANDVITCGAEPLFFLDYIATGKLSPAAMAEVVEGIASGCSQSGCSLLGGETAEMPGFYPAGRYDLAGFCVAVVDEPRLIDGQTIQAGDQLLAIASSGVHSNGFSLVRRILEANQVPLETSQAALGGRSAAEALLEPTLLYAPLVKALLQSPELELRGMAHITGGGLPENLPRPLPQGLAAQIDPGSWQRPALFHWLQELGSVPERDLWHTFNLGIGYVLVLPESSCQQALEVVHNSGFTGWICGEIVVGQGVLGLPAGA.

It belongs to the AIR synthase family.

The protein resides in the cytoplasm. It catalyses the reaction 2-formamido-N(1)-(5-O-phospho-beta-D-ribosyl)acetamidine + ATP = 5-amino-1-(5-phospho-beta-D-ribosyl)imidazole + ADP + phosphate + H(+). Its pathway is purine metabolism; IMP biosynthesis via de novo pathway; 5-amino-1-(5-phospho-D-ribosyl)imidazole from N(2)-formyl-N(1)-(5-phospho-D-ribosyl)glycinamide: step 2/2. This chain is Phosphoribosylformylglycinamidine cyclo-ligase, found in Synechococcus sp. (strain RCC307).